Consider the following 286-residue polypeptide: uncharacterized protein (286 aa).

7 consecutive transmembrane segments (helical) span residues leucine 30–glutamine 50, leucine 68–phenylalanine 88, tryptophan 99–leucine 119, isoleucine 136–leucine 156, leucine 169–isoleucine 189, isoleucine 205–valine 225, and serine 254–leucine 274.

It is found in the cell membrane. This is an uncharacterized protein from Mycoplasma genitalium (strain ATCC 33530 / DSM 19775 / NCTC 10195 / G37) (Mycoplasmoides genitalium).